The chain runs to 347 residues: N-acetyl-gamma-glutamyl-phosphate reductase (347 aa).

The active site involves Cys-151.

This sequence belongs to the NAGSA dehydrogenase family. Type 1 subfamily.

The protein localises to the cytoplasm. It carries out the reaction N-acetyl-L-glutamate 5-semialdehyde + phosphate + NADP(+) = N-acetyl-L-glutamyl 5-phosphate + NADPH + H(+). It functions in the pathway amino-acid biosynthesis; L-arginine biosynthesis; N(2)-acetyl-L-ornithine from L-glutamate: step 3/4. Its function is as follows. Catalyzes the NADPH-dependent reduction of N-acetyl-5-glutamyl phosphate to yield N-acetyl-L-glutamate 5-semialdehyde. The protein is N-acetyl-gamma-glutamyl-phosphate reductase of Corynebacterium glutamicum (strain R).